A 770-amino-acid polypeptide reads, in one-letter code: ARF GTPase-activating protein GIT1 (770 aa).

The Arf-GAP domain maps to 1–124 (MSRKGPRAEV…AFVHKLPCRD (124 aa)). Residues 1–124 (MSRKGPRAEV…AFVHKLPCRD (124 aa)) are interaction with gamma-tubulin and localization to the centrosome. The C4-type zinc finger occupies 11–34 (CADCSAPDPGWASISRGVLVCDEC). ANK repeat units follow at residues 132 to 161 (DLSKQLHSSVRTGNLETCLRLLSLGAQANF), 166 to 195 (KGTTPLHVAAKAGQTLQAELLVVYGADPGS), and 199 to 228 (NGRTPIDYARQAGHHELAERLVECQYELTD). Y224 is subject to Phosphotyrosine. An interaction with PCLO region spans residues 245–374 (HYIIPQMADR…QGKSLSSPTD (130 aa)). Residues 253-424 (DRSRQKCMSQ…NRARSMDSSD (172 aa)) form an interaction with PTK2/FAK1 region. The segment at 254 to 376 (RSRQKCMSQS…KSLSSPTDNL (123 aa)) is interaction with ARHGEF7. A disordered region spans residues 363 to 425 (RQQGKSLSSP…RARSMDSSDL (63 aa)). Positions 366–383 (GKSLSSPTDNLELSARNQ) are enriched in polar residues. 2 positions are modified to phosphoserine: S368 and S371. T373 bears the Phosphothreonine mark. The segment at 375–596 (NLELSARNQS…QEGSRHASKL (222 aa)) is interaction with NCK2 and GRIN3A. Residues 375 to 596 (NLELSARNQS…QEGSRHASKL (222 aa)) are required for localization at synapses. Phosphoserine occurs at positions 379 and 384. Y392 is modified (phosphotyrosine). Phosphoserine occurs at positions 394 and 397. The segment covering 394-403 (SVASDEDTDQ) has biased composition (acidic residues). T401 is subject to Phosphothreonine. A phosphoserine mark is found at S419, S422, and S426. Residues 420–475 (MDSSDLSDGAVTLQEYLELKKALATSEAKVQQLMKVNSSLSDELRKLQREIHKLQA) are interaction with MAPK1. Positions 429-629 (AVTLQEYLEL…EGKRFLELSK (201 aa)) are interaction with IKBKG. The stretch at 449–483 (VQQLMKVNSSLSDELRKLQREIHKLQAENLQLRQP) forms a coiled coil. Residues S507 and S545 each carry the phosphoserine modification. T546 carries the phosphothreonine modification. Phosphotyrosine occurs at positions 554 and 563. 4 positions are modified to phosphoserine: S570, S580, S601, and S605. Residues 574-586 (VTFTPSSPLLSSS) are compositionally biased toward low complexity. The disordered stretch occupies residues 574-615 (VTFTPSSPLLSSSQEGSRHASKLSRHGSGAESDYENTQSGEP). T610 is subject to Phosphothreonine. S639 carries the phosphoserine modification. The segment at 646–770 (PGLPSTEDVI…VTITTREKKQ (125 aa)) is interaction with PXN and TGFB1I1.

In terms of assembly, forms homodimers and possibly oligomers. May form heterooligomers with GIT2. Interacts with G protein-coupled receptor kinases, including GRK2, GRK3, GRK5 and GRK6. Interacts with PPFIA1, PPFIA2 and PPFIA4. Interacts with GRIP1 and forms a ternary complex with PPFIA1 and GRIP1. Directly interacts with ARHGEF7/beta-PIX, forming in vitro a heptameric complex made of a GIT1 dimer and an ARHGEF7 trimer. Directly interacts with PXN/paxillin; this interaction is enhanced in the presence of ARHGEF7. Directly interacts (via C-terminus) with TGFB1I1/Hic-5 (via LD motif 3). Directly interacts with PTK2/FAK1. May interact with PTK2B/PYK2; this interaction may be indirect. Interacts with AMPA receptors GRIA2/3. Directly interacts with protein Piccolo/PCLO. Forms a complex with Ephrin-B1/EFNB1 and NCK2/GRB4 (via SH2); this interaction is important for spine morphogenesis and synapse formation. Interaction with NCK2 is transient and depends upon GIT1 phosphorylation at Tyr-392. Interacts with GRIN3A/GluN3A (via C-terminus); this interaction competes with GIT1 interaction with ARHGEF7 and limits synaptic localization of GIT1. Interacts with IKBKG/NEMO in resting bone mesenchymal stem cells, as well as in TNF-stimulated cells; this interaction may increase IKBKG affinity for 'Lys-63'-linked polyubiquitin chains. Interacts with GABA(A) receptors, including GABRB3 and GABRG2. Interacts with SCRIB. Interacts (via N- and C-terminus) with ENTR1/SDCCAG3 (via N-terminus); this interaction is direct. May form a tripartite complex with ENTR1 and PTPN13. Interacts with YWHAZ. Interacts with PAK1 and PAK3. Directly interacts (via N-terminus) with gamma-tubulin. Interacts with MAPK1 and MAPK3; this interaction is required for MAPK1/3 recruitment to focal adhesions. Phosphorylated on tyrosine residues by PTK2/FAK1 and SRC in growing fibroblasts. Phosphorylation at Tyr-392 is induced by activation of Ephrin-B1/EFNB1 and catalyzed by SRC family kinases. It is required for the interaction with NCK2 and for GIT1 recruitment to synapses in hippocampal neurons. Widely expressed. Expressed at high levels in testis (at protein level). Expressed in the brain, including in CA1 hippocampal neurons, in the amygdala, and thalamic nuclei (at protein level).

The protein resides in the cytoplasm. It localises to the synapse. Its subcellular location is the presynapse. It is found in the postsynapse. The protein localises to the postsynaptic density. The protein resides in the cell junction. It localises to the focal adhesion. Its subcellular location is the cell projection. It is found in the lamellipodium. The protein localises to the cytoskeleton. The protein resides in the microtubule organizing center. It localises to the centrosome. Its subcellular location is the spindle pole. In terms of biological role, GTPase-activating protein for ADP ribosylation factor family members, including ARF1. Multidomain scaffold protein that interacts with numerous proteins and therefore participates in many cellular functions, including receptor internalization, focal adhesion remodeling, and signaling by both G protein-coupled receptors and tyrosine kinase receptors. Through PAK1 activation, positively regulates microtubule nucleation during interphase. Plays a role in the regulation of cytokinesis; for this function, may act in a pathway also involving ENTR1 and PTPN13. May promote cell motility both by regulating focal complex dynamics and by the activation of RAC1. May act as scaffold for MAPK1/3 signal transduction, recruiting MAPK1/3 to focal adhesions after EGF stimulation via a Src-dependent pathway, hence stimulating cell migration. Plays a role in brain development and function. Involved in the regulation of spine density and synaptic plasticity that is required for processes involved in learning. Plays an important role in dendritic spine morphogenesis and synapse formation. In hippocampal neurons, recruits guanine nucleotide exchange factors (GEFs), such as ARHGEF7/beta-PIX, to the synaptic membrane. These in turn locally activate RAC1, which is an essential step for spine morphogenesis and synapse formation. May contribute to the organization of presynaptic active zones through oligomerization and formation of a Piccolo/PCLO-based protein network, which includes ARHGEF7/beta-PIX and FAK1. In neurons, through its interaction with liprin-alpha family members, may be required for AMPA receptor (GRIA2/3) proper targeting to the cell membrane. In complex with GABA(A) receptors and ARHGEF7, plays a crucial role in regulating GABA(A) receptor synaptic stability, maintaining GPHN/gephyrin scaffolds and hence GABAergic inhibitory synaptic transmission, by locally coordinating RAC1 and PAK1 downstream effector activity, leading to F-actin stabilization. May also be important for RAC1 downstream signaling pathway through PAK3 and regulation of neuronal inhibitory transmission at presynaptic input. Required for successful bone regeneration during fracture healing. The function in intramembranous ossification may, at least partly, exerted by macrophages in which GIT1 is a key negative regulator of redox homeostasis, IL1B production, and glycolysis, acting through the ERK1/2/NRF2/NFE2L2 axis. May also play a role in angiogenesis during fracture healing. In this process, may regulate activation of the canonical NF-kappa-B signal in bone mesenchymal stem cells by enhancing the interaction between NEMO and 'Lys-63'-ubiquitinated RIPK1/RIP1, eventually leading to enhanced production of VEGFA and others angiogenic factors. Essential for VEGF signaling through the activation of phospholipase C-gamma and ERK1/2, hence may control endothelial cell proliferation and angiogenesis. This Rattus norvegicus (Rat) protein is ARF GTPase-activating protein GIT1.